The chain runs to 291 residues: 2-C-methyl-D-erythritol 4-phosphate cytidylyltransferase (291 aa).

A disordered region spans residues 1–23; it reads MTERDFDTPVETPTVQPAPAQGA.

Belongs to the IspD/TarI cytidylyltransferase family. IspD subfamily.

The catalysed reaction is 2-C-methyl-D-erythritol 4-phosphate + CTP + H(+) = 4-CDP-2-C-methyl-D-erythritol + diphosphate. It participates in isoprenoid biosynthesis; isopentenyl diphosphate biosynthesis via DXP pathway; isopentenyl diphosphate from 1-deoxy-D-xylulose 5-phosphate: step 2/6. Its function is as follows. Catalyzes the formation of 4-diphosphocytidyl-2-C-methyl-D-erythritol from CTP and 2-C-methyl-D-erythritol 4-phosphate (MEP). This Bifidobacterium longum (strain DJO10A) protein is 2-C-methyl-D-erythritol 4-phosphate cytidylyltransferase.